Reading from the N-terminus, the 228-residue chain is Phosphoglycolate phosphatase (228 aa).

Residue Asp12 is the Nucleophile of the active site. Mg(2+)-binding residues include Asp12, Asp14, and Asp177.

It belongs to the HAD-like hydrolase superfamily. CbbY/CbbZ/Gph/YieH family. Requires Mg(2+) as cofactor.

The enzyme catalyses 2-phosphoglycolate + H2O = glycolate + phosphate. Its pathway is organic acid metabolism; glycolate biosynthesis; glycolate from 2-phosphoglycolate: step 1/1. Its function is as follows. Specifically catalyzes the dephosphorylation of 2-phosphoglycolate. Is involved in the dissimilation of the intracellular 2-phosphoglycolate formed during the DNA repair of 3'-phosphoglycolate ends, a major class of DNA lesions induced by oxidative stress. The protein is Phosphoglycolate phosphatase of Vibrio vulnificus (strain YJ016).